The chain runs to 308 residues: Protein FdhE homolog (308 aa).

It belongs to the FdhE family.

Its subcellular location is the cytoplasm. Necessary for formate dehydrogenase activity. This Edwardsiella ictaluri (strain 93-146) protein is Protein FdhE homolog.